Here is a 337-residue protein sequence, read N- to C-terminus: Glutathione transferase 3 (337 aa).

The Cytoplasmic portion of the chain corresponds to 1–239 (MPTKSTFSRW…NKYQYTLDFC (239 aa)). Phosphoserine is present on residues Ser66, Ser72, Ser99, and Ser116. The interval 66-95 (SMTVDQSKDERNEYGSGSGNGSGSGSCDTA) is disordered. Residues 107–132 (KEDDDEKPQSGDETSATKPLSSRNAN) form a disordered region. A compositionally biased stretch (polar residues) spans 117 to 132 (GDETSATKPLSSRNAN). The chain crosses the membrane as a helical span at residues 240–260 (LPILTWLLFFRGIPTLVSYYI). Topologically, residues 261-313 (NFIRYDLNIELDPMTFNLTKFLISLAIFKTCNNKNIDFHSFRCVNQLWTQLCT) are perinuclear space. The chain crosses the membrane as a helical span at residues 314–336 (VNRSLGMVPLVFSMVSCLLTLYV). Residue Leu337 is a topological domain, cytoplasmic.

It is found in the nucleus membrane. This chain is Glutathione transferase 3 (GTT3), found in Saccharomyces cerevisiae (strain ATCC 204508 / S288c) (Baker's yeast).